The following is a 175-amino-acid chain: Inorganic pyrophosphatase 1 (175 aa).

3 residues coordinate substrate: lysine 30, arginine 44, and tyrosine 56. 3 residues coordinate Mg(2+): aspartate 66, aspartate 71, and aspartate 103. Position 142 (tyrosine 142) interacts with substrate.

The protein belongs to the PPase family. As to quaternary structure, homohexamer. It depends on Mg(2+) as a cofactor.

Its subcellular location is the cytoplasm. It catalyses the reaction diphosphate + H2O = 2 phosphate + H(+). Functionally, catalyzes the hydrolysis of inorganic pyrophosphate (PPi) forming two phosphate ions. The sequence is that of Inorganic pyrophosphatase 1 from Pseudomonas syringae pv. tomato (strain ATCC BAA-871 / DC3000).